Reading from the N-terminus, the 557-residue chain is Potassium-transporting ATPase potassium-binding subunit (557 aa).

Transmembrane regions (helical) follow at residues 5 to 25 (GFLLIATFLLVLMVLARPLGS), 63 to 83 (LSAILGLNILGLAVLFFMLLG), 132 to 152 (GLTVQNFLSAASGIAVIFALI), 170 to 190 (LLRITLWVLAPVALLIALFFI), 253 to 273 (FVQMLAIFLIPTALCFAFGEV), 283 to 303 (LLWAMSVIFVICTGVVMWAEV), 329 to 349 (VLVSSLFAVVTTAASCGAVIA), 356 to 376 (ALGGMVPMWLMQIGEVVFGGV), 379 to 399 (GLYGMMLFVLLAVFIAGLMIG), 416 to 436 (LTALAILVTPTLVLMGAALAM), 484 to 504 (LLALCMFVGRFGVIIPVMAIA), and 526 to 546 (LFVGLLIGTVLLVGALTFIPA).

The protein belongs to the KdpA family. As to quaternary structure, the system is composed of three essential subunits: KdpA, KdpB and KdpC.

The protein localises to the cell inner membrane. Functionally, part of the high-affinity ATP-driven potassium transport (or Kdp) system, which catalyzes the hydrolysis of ATP coupled with the electrogenic transport of potassium into the cytoplasm. This subunit binds the periplasmic potassium ions and delivers the ions to the membrane domain of KdpB through an intramembrane tunnel. The protein is Potassium-transporting ATPase potassium-binding subunit of Escherichia coli O6:H1 (strain CFT073 / ATCC 700928 / UPEC).